A 137-amino-acid chain; its full sequence is uncharacterized protein (137 aa).

This sequence belongs to the ycf72 family.

It is found in the plastid. The protein localises to the chloroplast. This is an uncharacterized protein from Zea mays (Maize).